We begin with the raw amino-acid sequence, 110 residues long: Carboxysome shell protein CsoS1B (110 aa).

The BMC domain maps to 8–93 (ALGMIETRGL…VHSEVEIILP (86 aa)).

The protein belongs to the bacterial microcompartments protein family. CsoS1 subfamily. Homohexamer with a small central pore. Interacts with the N-terminus (residues 1-136) of RuBisCO (CbbL).

It localises to the carboxysome. Its function is as follows. One of shell proteins of the carboxysome, a polyhedral inclusion where RuBisCO (ribulose bisphosphate carboxylase, ccbL-ccbS) is sequestered. Assembles into hexamers which make sheets that form the facets of the polyhedral carboxysome. The shell probably limits the diffusion of CO(2) into and out of the carboxysome. There are estimated to be 540 CsoS1B proteins per carboxysome. In terms of biological role, unlike beta-carboxysomes, alpha-carboxysomes (Cb) can form without cargo protein. CsoS2 is essential for Cb formation and is also capable of targeting foreign proteins to the Cb. The Cb shell assembles with the aid of CsoS2; CsoS1A, CsoS1B and CsoS1C form the majority of the shell while CsoS4A and CsoS4B form vertices. CsoS1D forms pseudohexamers that probably control metabolite flux into and out of the shell. This Halothiobacillus neapolitanus (strain ATCC 23641 / c2) (Thiobacillus neapolitanus) protein is Carboxysome shell protein CsoS1B.